The following is a 189-amino-acid chain: Ribose 1,5-bisphosphate phosphokinase PhnN (189 aa).

10 to 17 (GPSGSGKD) lines the ATP pocket.

It belongs to the ribose 1,5-bisphosphokinase family.

The enzyme catalyses alpha-D-ribose 1,5-bisphosphate + ATP = 5-phospho-alpha-D-ribose 1-diphosphate + ADP. Its pathway is metabolic intermediate biosynthesis; 5-phospho-alpha-D-ribose 1-diphosphate biosynthesis; 5-phospho-alpha-D-ribose 1-diphosphate from D-ribose 5-phosphate (route II): step 3/3. Catalyzes the phosphorylation of ribose 1,5-bisphosphate to 5-phospho-D-ribosyl alpha-1-diphosphate (PRPP). In Enterobacter lignolyticus (strain SCF1), this protein is Ribose 1,5-bisphosphate phosphokinase PhnN.